Consider the following 339-residue polypeptide: Silicatein (339 aa).

Residues 1 to 18 (MAIVYGAILFQIILIACA) form the signal peptide. Residues 19-122 (EFPPEWHAWK…REYQAPATVS (104 aa)) constitute a propeptide that is removed on maturation. Leucine 123 is modified (n,N-dimethylleucine; alternate). Leucine 123 is modified (N-methylleucine; alternate). Serine 188 bears the Phosphoserine mark. Tyrosine 219 carries the phosphotyrosine modification. Residues histidine 286 and asparagine 306 contribute to the active site. Position 335 is a phosphoserine (serine 335).

This sequence belongs to the peptidase C1 family. As to quaternary structure, homodimer. Homodimerization occurs as a result of non-covalent interactions and not through disulfide linkages between the two monomers.

Its function is as follows. Polymerizes silica around the axial filament during spicule formation. The polypeptide is Silicatein (Petrosia ficiformis (Common Mediterranean sponge)).